Consider the following 110-residue polypeptide: NADH-quinone oxidoreductase subunit K (110 aa).

Transmembrane regions (helical) follow at residues Leu13–Met33, Ile41–Val61, and Ile73–Tyr93.

The protein belongs to the complex I subunit 4L family. In terms of assembly, NDH-1 is composed of 14 different subunits. Subunits NuoA, H, J, K, L, M, N constitute the membrane sector of the complex.

The protein resides in the cell inner membrane. The catalysed reaction is a quinone + NADH + 5 H(+)(in) = a quinol + NAD(+) + 4 H(+)(out). Functionally, NDH-1 shuttles electrons from NADH, via FMN and iron-sulfur (Fe-S) centers, to quinones in the respiratory chain. The immediate electron acceptor for the enzyme in this species is believed to be ubiquinone. Couples the redox reaction to proton translocation (for every two electrons transferred, four hydrogen ions are translocated across the cytoplasmic membrane), and thus conserves the redox energy in a proton gradient. The sequence is that of NADH-quinone oxidoreductase subunit K from Rickettsia typhi (strain ATCC VR-144 / Wilmington).